Consider the following 308-residue polypeptide: Cell division protein FtsQ (308 aa).

Residues 1 to 53 lie on the Cytoplasmic side of the membrane; it reads MDSGGRIVYALNVEKTGFLRILSVTVLQRLYRRVFWFLFKCVAGIDVPRHAGS. The chain crosses the membrane as a helical span at residues 54-74; sequence LAVFSFFFLSILYSISSGGYM. Residues 75–308 lie on the Periplasmic side of the membrane; the sequence is NHFMKVAISN…LLKMLKAGSV (234 aa). A POTRA domain is found at 87-155; that stretch reads FLVTHVDMSG…DRLRISLVER (69 aa).

It belongs to the FtsQ/DivIB family. FtsQ subfamily.

It is found in the cell inner membrane. In terms of biological role, essential cell division protein. The sequence is that of Cell division protein FtsQ from Bartonella bacilliformis.